Here is a 95-residue protein sequence, read N- to C-terminus: Putative RelE-like toxin protein (95 aa).

It belongs to the RelE toxin family.

Functionally, toxic component of a type II toxin-antitoxin (TA) system. The chain is Putative RelE-like toxin protein from Escherichia coli.